The sequence spans 347 residues: Eukaryotic translation initiation factor 3 subunit I (347 aa).

5 WD repeats span residues 8–49, 51–89, 149–190, 194–233, and 291–330; these read GHER…GTLD, HMGSIWSIDSDHTSLYCVTGSADYTIKVWTLMNGQCVQT, THEG…KLVE, VHKDSVSDLQFSPDRTYFITCSRDSNAHIIDIETFKVLKT, and GHFGPLNSIAVSPQGTSYTSGGEEGLVRLHHFEKSYFDFK.

Belongs to the eIF-3 subunit I family. In terms of assembly, component of the eukaryotic translation initiation factor 3 (eIF-3) complex.

It is found in the cytoplasm. Functionally, component of the eukaryotic translation initiation factor 3 (eIF-3) complex, which is involved in protein synthesis of a specialized repertoire of mRNAs and, together with other initiation factors, stimulates binding of mRNA and methionyl-tRNAi to the 40S ribosome. The eIF-3 complex specifically targets and initiates translation of a subset of mRNAs involved in cell proliferation. The polypeptide is Eukaryotic translation initiation factor 3 subunit I (Candida glabrata (strain ATCC 2001 / BCRC 20586 / JCM 3761 / NBRC 0622 / NRRL Y-65 / CBS 138) (Yeast)).